Reading from the N-terminus, the 151-residue chain is UPF0178 protein VSAL_I0701 (151 aa).

Belongs to the UPF0178 family.

This Aliivibrio salmonicida (strain LFI1238) (Vibrio salmonicida (strain LFI1238)) protein is UPF0178 protein VSAL_I0701.